A 422-amino-acid polypeptide reads, in one-letter code: Enolase (422 aa).

Residue Gln-161 coordinates (2R)-2-phosphoglycerate. Residue Glu-203 is the Proton donor of the active site. Residues Asp-240, Glu-283, and Asp-310 each contribute to the Mg(2+) site. (2R)-2-phosphoglycerate-binding residues include Lys-335, Arg-364, Ser-365, and Lys-386. Residue Lys-335 is the Proton acceptor of the active site.

The protein belongs to the enolase family. Requires Mg(2+) as cofactor.

Its subcellular location is the cytoplasm. The protein resides in the secreted. It localises to the cell surface. It carries out the reaction (2R)-2-phosphoglycerate = phosphoenolpyruvate + H2O. The protein operates within carbohydrate degradation; glycolysis; pyruvate from D-glyceraldehyde 3-phosphate: step 4/5. In terms of biological role, catalyzes the reversible conversion of 2-phosphoglycerate (2-PG) into phosphoenolpyruvate (PEP). It is essential for the degradation of carbohydrates via glycolysis. This chain is Enolase, found in Deinococcus radiodurans (strain ATCC 13939 / DSM 20539 / JCM 16871 / CCUG 27074 / LMG 4051 / NBRC 15346 / NCIMB 9279 / VKM B-1422 / R1).